Reading from the N-terminus, the 425-residue chain is NAD kinase 2, mitochondrial (425 aa).

Residues 1–45 (MDTSAIQQTLVKIYQRQAWQPPRKASKNETTVGKPRELAGGGSPA) constitute a mitochondrion transit peptide. The disordered stretch occupies residues 20-46 (QPPRKASKNETTVGKPRELAGGGSPAD). Lys59 is modified (N6-acetyllysine; alternate). Lys59 carries the N6-succinyllysine; alternate modification. A Phosphoserine modification is found at Ser171. Position 285 is an N6-succinyllysine (Lys285). An N6-acetyllysine; alternate modification is found at Lys300. The residue at position 300 (Lys300) is an N6-succinyllysine; alternate. Residue Ser350 is modified to Phosphoserine. Lys380 bears the N6-acetyllysine mark.

The protein belongs to the NAD kinase family. Homodimer.

It is found in the mitochondrion. It catalyses the reaction NAD(+) + ATP = ADP + NADP(+) + H(+). Inhibited by NADH, NADPH and NADP(+). Mitochondrial NAD(+) kinase that phosphorylates NAD(+) to yield NADP(+). Can use both ATP or inorganic polyphosphate as the phosphoryl donor. This chain is NAD kinase 2, mitochondrial (Nadk2), found in Rattus norvegicus (Rat).